A 128-amino-acid polypeptide reads, in one-letter code: Fluoride-specific ion channel FluC (128 aa).

A run of 4 helical transmembrane segments spans residues 5–25 (LFIS…GLLF), 34–54 (FGAL…LGLF), 67–87 (FLIT…SEVV), and 99–119 (FCVL…GIWI). The Na(+) site is built by Gly74 and Thr77.

This sequence belongs to the fluoride channel Fluc/FEX (TC 1.A.43) family.

The protein localises to the cell inner membrane. The enzyme catalyses fluoride(in) = fluoride(out). Na(+) is not transported, but it plays an essential structural role and its presence is essential for fluoride channel function. Its function is as follows. Fluoride-specific ion channel. Important for reducing fluoride concentration in the cell, thus reducing its toxicity. In Haemophilus influenzae (strain PittEE), this protein is Fluoride-specific ion channel FluC.